Reading from the N-terminus, the 446-residue chain is ATP-dependent protease ATPase subunit HslU (446 aa).

ATP contacts are provided by residues Ile18, 60–65 (GVGKTE), Asp259, Glu324, and Arg396.

Belongs to the ClpX chaperone family. HslU subfamily. In terms of assembly, a double ring-shaped homohexamer of HslV is capped on each side by a ring-shaped HslU homohexamer. The assembly of the HslU/HslV complex is dependent on binding of ATP.

The protein localises to the cytoplasm. Functionally, ATPase subunit of a proteasome-like degradation complex; this subunit has chaperone activity. The binding of ATP and its subsequent hydrolysis by HslU are essential for unfolding of protein substrates subsequently hydrolyzed by HslV. HslU recognizes the N-terminal part of its protein substrates and unfolds these before they are guided to HslV for hydrolysis. This is ATP-dependent protease ATPase subunit HslU from Vibrio atlanticus (strain LGP32) (Vibrio splendidus (strain Mel32)).